A 231-amino-acid polypeptide reads, in one-letter code: DNA mismatch repair protein MutH (231 aa).

The protein belongs to the MutH family.

The protein localises to the cytoplasm. In terms of biological role, sequence-specific endonuclease that cleaves unmethylated GATC sequences. It is involved in DNA mismatch repair. In Klebsiella pneumoniae (strain 342), this protein is DNA mismatch repair protein MutH.